The chain runs to 481 residues: tRNA-2-methylthio-N(6)-dimethylallyladenosine synthase (481 aa).

The 117-residue stretch at 24–140 (RKLFIESYGC…LPNLINEVEE (117 aa)) folds into the MTTase N-terminal domain. [4Fe-4S] cluster-binding residues include Cys-33, Cys-69, Cys-103, Cys-178, Cys-182, and Cys-185. Residues 164-410 (QSNGVSAFVS…VDLQQKHSKQ (247 aa)) enclose the Radical SAM core domain. The TRAM domain occupies 413-476 (NSVIGTTVEV…SATLIGEPIG (64 aa)).

It belongs to the methylthiotransferase family. MiaB subfamily. In terms of assembly, monomer. [4Fe-4S] cluster is required as a cofactor.

Its subcellular location is the cytoplasm. It carries out the reaction N(6)-dimethylallyladenosine(37) in tRNA + (sulfur carrier)-SH + AH2 + 2 S-adenosyl-L-methionine = 2-methylsulfanyl-N(6)-dimethylallyladenosine(37) in tRNA + (sulfur carrier)-H + 5'-deoxyadenosine + L-methionine + A + S-adenosyl-L-homocysteine + 2 H(+). Catalyzes the methylthiolation of N6-(dimethylallyl)adenosine (i(6)A), leading to the formation of 2-methylthio-N6-(dimethylallyl)adenosine (ms(2)i(6)A) at position 37 in tRNAs that read codons beginning with uridine. This Christiangramia forsetii (strain DSM 17595 / CGMCC 1.15422 / KT0803) (Gramella forsetii) protein is tRNA-2-methylthio-N(6)-dimethylallyladenosine synthase.